The following is a 194-amino-acid chain: Type II secretion system protein H (194 aa).

Positions 1-6 are cleaved as a propeptide — leader sequence; it reads MTATRG. Phenylalanine 7 carries the N-methylphenylalanine modification. A helical membrane pass occupies residues 12–32; it reads ILLVLVLVSASAVAVIATFPV.

It belongs to the GSP H family. In terms of assembly, type II secretion is composed of four main components: the outer membrane complex, the inner membrane complex, the cytoplasmic secretion ATPase and the periplasm-spanning pseudopilus. Interacts with core component EpsG. Post-translationally, cleaved by prepilin peptidase. Methylated by prepilin peptidase at the amino group of the N-terminal phenylalanine once the leader sequence is cleaved by prepilin peptidase.

The protein resides in the cell inner membrane. Functionally, component of the type II secretion system required for the energy-dependent secretion of extracellular factors such as proteases and toxins from the periplasm. Part of the pseudopilus tip complex that is critical for the recognition and binding of secretion substrates. This Vibrio cholerae serotype O1 (strain ATCC 39315 / El Tor Inaba N16961) protein is Type II secretion system protein H (epsH).